The primary structure comprises 377 residues: Mechanosensory abnormality protein 6 (377 aa).

Topologically, residues 1–13 (MGLQSAAAHFINR) are cytoplasmic. A helical transmembrane segment spans residues 14 to 34 (FIIWITIFMVACFLLRLLVVL). At 35 to 377 (DLNKRVYNHT…HCDLTHSYIT (343 aa)) the chain is on the extracellular side. Residues Cys48 and Cys369 are joined by a disulfide bond. The N-linked (GlcNAc...) asparagine glycan is linked to Asn94.

Belongs to the paraoxonase family. Component of a non-voltage-gated amiloride-sensitive cation channel complex (also called the degenerin channel complex) composed of at least the mec-2, mec-4, mec-6 and mec-10 subunits; the complex mediates mechanotransduction in touch cells. Interacts with mec-2, mec-4 and mec-10. Glycosylated. As to expression, expressed in neurons including the six touch receptors, ventral cord motor neurons, HSN, PVD, PVC, IL1, and several neurons near the nerve ring, in the anal ganglion and in the male tail sensory rays, in muscles including the body wall, vulval, intestinal, anal depressor and sphincter muscles, and in the excretory canal.

It localises to the cell membrane. It is found in the cell projection. The protein resides in the axon. Subunit of an amiloride-sensitive cation channel (degenerin channel complex) permeable for sodium, potassium, lithium and N-methylglucamine, and required for mechanosensory transduction (touch sensitivity). Interacts with degenerin channel proteins and stabilizes the channel. Plays a role in mechanosensory transduction (touch sensitivity). The chain is Mechanosensory abnormality protein 6 from Caenorhabditis elegans.